We begin with the raw amino-acid sequence, 185 residues long: Elongation factor P (185 aa).

Belongs to the elongation factor P family.

Its subcellular location is the cytoplasm. The protein operates within protein biosynthesis; polypeptide chain elongation. Involved in peptide bond synthesis. Stimulates efficient translation and peptide-bond synthesis on native or reconstituted 70S ribosomes in vitro. Probably functions indirectly by altering the affinity of the ribosome for aminoacyl-tRNA, thus increasing their reactivity as acceptors for peptidyl transferase. The polypeptide is Elongation factor P (Synechococcus sp. (strain JA-3-3Ab) (Cyanobacteria bacterium Yellowstone A-Prime)).